The chain runs to 344 residues: tRNA(Ile)-lysidine synthase (344 aa).

ATP is bound at residue 43 to 48; the sequence is SGGADS.

Belongs to the tRNA(Ile)-lysidine synthase family.

Its subcellular location is the cytoplasm. The enzyme catalyses cytidine(34) in tRNA(Ile2) + L-lysine + ATP = lysidine(34) in tRNA(Ile2) + AMP + diphosphate + H(+). In terms of biological role, ligates lysine onto the cytidine present at position 34 of the AUA codon-specific tRNA(Ile) that contains the anticodon CAU, in an ATP-dependent manner. Cytidine is converted to lysidine, thus changing the amino acid specificity of the tRNA from methionine to isoleucine. The protein is tRNA(Ile)-lysidine synthase of Bordetella parapertussis (strain 12822 / ATCC BAA-587 / NCTC 13253).